An 863-amino-acid chain; its full sequence is Leucine--tRNA ligase (863 aa).

The 'HIGH' region motif lies at 42 to 52 (PYPSGKIHMGH). The 'KMSKS' region signature appears at 618-622 (KMSKS). Residue Lys-621 coordinates ATP.

The protein belongs to the class-I aminoacyl-tRNA synthetase family.

It localises to the cytoplasm. It carries out the reaction tRNA(Leu) + L-leucine + ATP = L-leucyl-tRNA(Leu) + AMP + diphosphate. The chain is Leucine--tRNA ligase from Desulforapulum autotrophicum (strain ATCC 43914 / DSM 3382 / VKM B-1955 / HRM2) (Desulfobacterium autotrophicum).